Reading from the N-terminus, the 288-residue chain is Polyamine aminopropyltransferase (288 aa).

The PABS domain maps to 9–238 (ETLHDQFGQY…GIMTFAWATD (230 aa)). Gln-33 is an S-methyl-5'-thioadenosine binding site. The spermidine site is built by His-64 and Asp-88. Residues Glu-108 and 140–141 (DG) contribute to the S-methyl-5'-thioadenosine site. Catalysis depends on Asp-158, which acts as the Proton acceptor. 158–161 (DCTD) contacts spermidine. Pro-165 lines the S-methyl-5'-thioadenosine pocket.

This sequence belongs to the spermidine/spermine synthase family. Homodimer or homotetramer.

The protein resides in the cytoplasm. It carries out the reaction S-adenosyl 3-(methylsulfanyl)propylamine + putrescine = S-methyl-5'-thioadenosine + spermidine + H(+). It functions in the pathway amine and polyamine biosynthesis; spermidine biosynthesis; spermidine from putrescine: step 1/1. Its function is as follows. Catalyzes the irreversible transfer of a propylamine group from the amino donor S-adenosylmethioninamine (decarboxy-AdoMet) to putrescine (1,4-diaminobutane) to yield spermidine. The polypeptide is Polyamine aminopropyltransferase (Shigella flexneri serotype 5b (strain 8401)).